Reading from the N-terminus, the 83-residue chain is Scyreptin (83 aa).

Functionally, cationic antimicrobial peptide that exhibits a potent and broad-spectrum antimicrobial activity against both bacteria and fungi, as well as against the multidrug-resistant bacteria P.aeruginosa. Exhibits rapid bactericidal kinetic. Acts by destroying the integrity of bacterial membranes, leading to bacterial death. Also exhibits potent anti-biofilm activity against P.aeruginosa. Shows high thermal stability and ion tolerance, as it maintains antibacterial activity even when heated to 100 degrees Celsius for 30 minutes and in presence of high levels of NaCl, CaCl(2) and MgCl(2). Does not show cytotoxicity and hemolytic activity. In a mouse model of burn infection, exhibits a remarkably reduction in the bacterial load caused by multidrug-resistant P.aeruginosa at the site of infection, and promotes wound healing. The protein is Scyreptin of Scylla paramamosain (Mud crab).